Reading from the N-terminus, the 335-residue chain is Protease HtpX homolog (335 aa).

3 consecutive transmembrane segments (helical) span residues 9-29 (VYMMLAVLGYFVMLLLASTIA), 42-62 (LFTSMVLLAGMILAISAAIIY), and 64-84 (ILAYAGVYISFYGLIIFLLII). H168 is a binding site for Zn(2+). E169 is an active-site residue. Zn(2+) is bound at residue H172. 2 helical membrane passes run 179–199 (AVMLLFGLLPSVIFYLGYALL) and 213–233 (AAIGIAAVIVSFIVQILVLAF). E238 contributes to the Zn(2+) binding site.

It belongs to the peptidase M48B family. It depends on Zn(2+) as a cofactor.

The protein localises to the cell membrane. This Archaeoglobus fulgidus (strain ATCC 49558 / DSM 4304 / JCM 9628 / NBRC 100126 / VC-16) protein is Protease HtpX homolog.